The sequence spans 172 residues: Adenine phosphoribosyltransferase (172 aa).

The protein belongs to the purine/pyrimidine phosphoribosyltransferase family. In terms of assembly, homodimer.

The protein resides in the cytoplasm. The catalysed reaction is AMP + diphosphate = 5-phospho-alpha-D-ribose 1-diphosphate + adenine. It functions in the pathway purine metabolism; AMP biosynthesis via salvage pathway; AMP from adenine: step 1/1. Functionally, catalyzes a salvage reaction resulting in the formation of AMP, that is energically less costly than de novo synthesis. This Polynucleobacter asymbioticus (strain DSM 18221 / CIP 109841 / QLW-P1DMWA-1) (Polynucleobacter necessarius subsp. asymbioticus) protein is Adenine phosphoribosyltransferase.